A 446-amino-acid polypeptide reads, in one-letter code: Chromosomal replication initiator protein DnaA (446 aa).

Positions M1–P92 are domain I, interacts with DnaA modulators. A disordered region spans residues E87–P107. A domain II region spans residues P93 to S109. Residues P96 to P107 are compositionally biased toward polar residues. The interval M110 to S326 is domain III, AAA+ region. The ATP site is built by G154, G156, K157, and T158. Residues S327 to K446 form a domain IV, binds dsDNA region.

It belongs to the DnaA family. In terms of assembly, oligomerizes as a right-handed, spiral filament on DNA at oriC.

The protein localises to the cytoplasm. Plays an essential role in the initiation and regulation of chromosomal replication. ATP-DnaA binds to the origin of replication (oriC) to initiate formation of the DNA replication initiation complex once per cell cycle. Binds the DnaA box (a 9 base pair repeat at the origin) and separates the double-stranded (ds)DNA. Forms a right-handed helical filament on oriC DNA; dsDNA binds to the exterior of the filament while single-stranded (ss)DNA is stabiized in the filament's interior. The ATP-DnaA-oriC complex binds and stabilizes one strand of the AT-rich DNA unwinding element (DUE), permitting loading of DNA polymerase. After initiation quickly degrades to an ADP-DnaA complex that is not apt for DNA replication. Binds acidic phospholipids. The protein is Chromosomal replication initiator protein DnaA of Bacillus cereus (strain ATCC 10987 / NRS 248).